The primary structure comprises 952 residues: Calsyntenin-1 (952 aa).

The N-terminal stretch at 1–28 (MLRRPAPALARAVRLLLAGLLYGGGVWA) is a signal peptide. At 29-830 (ARVNKHKPWL…PHPFAVVPST (802 aa)) the chain is on the extracellular side. Cadherin domains are found at residues 38–154 (LEPT…APVF) and 155–255 (KEKS…SPGW). N356 carries N-linked (GlcNAc...) asparagine glycosylation. The chain crosses the membrane as a helical span at residues 831–851 (ATVVIVVCVSFLVFMIILGVF). Over 852–952 (RIRAAHQRTM…LEWDYSTLSY (101 aa)) the chain is Cytoplasmic. A disordered region spans residues 886 to 952 (METYEDQHSS…LEWDYSTLSY (67 aa)). The segment covering 896 to 930 (EEEEEEEEEEESEDGEEEEDITSAESESSEEEEGG) has biased composition (acidic residues). Polar residues predominate over residues 934 to 952 (GQNTTRQQQLEWDYSTLSY).

Belongs to the calsyntenin family. In terms of assembly, directly interacts with APBA2. Forms a tripartite complex with APBA2 and APP. Interacts with KLC1. As to quaternary structure, interacts with APBB1; this interaction stabilizes AlcICD metabolism. Interacts with PSEN1. Proteolytically processed under normal cellular conditions. A primary zeta-cleavage generates a large extracellular (soluble) N-terminal domain (sAlc) and a short C-terminal transmembrane fragment (CTF1). A secondary cleavage catalyzed by presenilin gamma-secretase within the transmembrane domain releases the beta-Alc-alpha chain in the extracellular milieu and produces an intracellular fragment (AlcICD). This processing is strongly suppressed in the tripartite complex formed with APBA2 and APP, which seems to prevent the association with PSEN1. As to expression, preferentially expressed in the retina and brain.

The protein localises to the postsynaptic cell membrane. It localises to the endoplasmic reticulum membrane. The protein resides in the golgi apparatus membrane. It is found in the cell projection. Its subcellular location is the neuron projection. The protein localises to the nucleus. Functionally, postsynaptic adhesion molecule that binds to presynaptic neurexins to mediate both excitatory and inhibitory synapse formation. Promotes synapse development by acting as a cell adhesion molecule at the postsynaptic membrane, which associates with neurexin-alpha at the presynaptic membrane. Also functions as a cargo in axonal anterograde transport by acting as a molecular adapter that promotes KLC1 association with vesicles. Complex formation with APBA2 and APP, stabilizes APP metabolism and enhances APBA2-mediated suppression of beta-APP40 secretion, due to the retardation of intracellular APP maturation. As intracellular fragment AlcICD, suppresses APBB1-dependent transactivation stimulated by APP C-terminal intracellular fragment (AICD), most probably by competing with AICD for APBB1-binding. Its function is as follows. In complex with APBA2 and C99, a C-terminal APP fragment, abolishes C99 interaction with PSEN1 and thus APP C99 cleavage by gamma-secretase, most probably through stabilization of the direct interaction between APBA2 and APP. In Rattus norvegicus (Rat), this protein is Calsyntenin-1 (Clstn1).